Consider the following 474-residue polypeptide: tRNA-2-methylthio-N(6)-dimethylallyladenosine synthase (474 aa).

Positions 3–120 constitute an MTTase N-terminal domain; it reads QKLHIKTWGC…LPEMINQIRG (118 aa). [4Fe-4S] cluster is bound by residues cysteine 12, cysteine 49, cysteine 83, cysteine 157, cysteine 161, and cysteine 164. Residues 143–375 enclose the Radical SAM core domain; sequence RAEGPTAFVS…QERINQQAAQ (233 aa). The TRAM domain maps to 378-441; that stretch reads RRMLGTEQRV…TNSLRGEVVR (64 aa).

This sequence belongs to the methylthiotransferase family. MiaB subfamily. As to quaternary structure, monomer. It depends on [4Fe-4S] cluster as a cofactor.

The protein resides in the cytoplasm. The enzyme catalyses N(6)-dimethylallyladenosine(37) in tRNA + (sulfur carrier)-SH + AH2 + 2 S-adenosyl-L-methionine = 2-methylsulfanyl-N(6)-dimethylallyladenosine(37) in tRNA + (sulfur carrier)-H + 5'-deoxyadenosine + L-methionine + A + S-adenosyl-L-homocysteine + 2 H(+). Functionally, catalyzes the methylthiolation of N6-(dimethylallyl)adenosine (i(6)A), leading to the formation of 2-methylthio-N6-(dimethylallyl)adenosine (ms(2)i(6)A) at position 37 in tRNAs that read codons beginning with uridine. The chain is tRNA-2-methylthio-N(6)-dimethylallyladenosine synthase from Haemophilus influenzae (strain PittGG).